Here is a 417-residue protein sequence, read N- to C-terminus: Caveolae-associated protein 2 (417 aa).

Positions 1–42 are disordered; sequence MGEDAAQAEKFQHPNTDMLQEKPSNPSPMPSSTPSPSLNLGS. N-acetylglycine is present on G2. The interaction with CAVIN1 stretch occupies residues 2 to 168; that stretch reads GEDAAQAEKF…IFQEESEIPA (167 aa). S27, S35, S37, and S51 each carry phosphoserine. Coiled coils occupy residues 61–87 and 126–267; these read LLDK…INLE and RAVR…VERR. The segment at 62 to 100 is leucine-zipper; sequence LDKLVNMLDAVRENQHNMEQRQINLEGSVKGIQNDLTKL. A Phosphothreonine modification is found at T195. 2 disordered regions span residues 198-242 and 256-381; these read NVDL…DSLK and KLGT…ALQQ. S202, S203, and S217 each carry phosphoserine. The span at 202–218 shows a compositional bias: acidic residues; sequence SSDDELPGDEEALEDSA. The segment covering 219 to 242 has biased composition (basic and acidic residues); it reads EEKMEESRAEKIKRSSLKKVDSLK. The segment covering 274 to 286 has biased composition (polar residues); sequence LTPNHQKASSGKS. S282, S283, S286, S287, S292, and S295 each carry phosphoserine. A compositionally biased stretch (basic and acidic residues) spans 302–320; it reads REGESSAENETKLEEQVQD. Phosphoserine occurs at positions 326, 335, 358, and 362. Residues 354–365 are compositionally biased toward polar residues; the sequence is RGNNSGVGSNAD. T367 carries the phosphothreonine modification. The segment covering 367–376 has biased composition (acidic residues); sequence TIEEDEEEES. Phosphotyrosine is present on Y387. S389 and S395 each carry phosphoserine.

It belongs to the CAVIN family. As to quaternary structure, component of the CAVIN complex composed of CAVIN1, CAVIN2, CAVIN3 and CAVIN. Interacts with CAVIN4; this augments the transactivation of NPPA by CAVIN4. Binds to PRKCA in the presence of phosphatidylserine. Interacts with CAVIN1 and CAV3. Post-translationally, the N-terminus is blocked. Phosphorylated on Ser residues.

It localises to the cytoplasm. It is found in the cytosol. Its subcellular location is the membrane. The protein localises to the caveola. Plays an important role in caveolar biogenesis and morphology. Regulates caveolae morphology by inducing membrane curvature within caveolae. Plays a role in caveola formation in a tissue-specific manner. Required for the formation of caveolae in the lung and fat endothelia but not in the heart endothelia. Negatively regulates the size or stability of CAVIN complexes in the lung endothelial cells. May play a role in targeting PRKCA to caveolae. The sequence is that of Caveolae-associated protein 2 from Rattus norvegicus (Rat).